Consider the following 293-residue polypeptide: Small ribosomal subunit protein uS2 (293 aa).

The tract at residues 219–293 (IASAKPDEPY…WATPKTEDWA (75 aa)) is disordered.

This sequence belongs to the universal ribosomal protein uS2 family. Component of the small ribosomal subunit. Mature ribosomes consist of a small (40S) and a large (60S) subunit. The 40S subunit contains about 33 different proteins and 1 molecule of RNA (18S). The 60S subunit contains about 49 different proteins and 3 molecules of RNA (28S, 5.8S and 5S). Interacts with ribosomal protein S21.

It is found in the cytoplasm. Required for the assembly and/or stability of the 40S ribosomal subunit. Required for the processing of the 20S rRNA-precursor to mature 18S rRNA in a late step of the maturation of 40S ribosomal subunits. This Hydra viridissima (Green hydra) protein is Small ribosomal subunit protein uS2.